Consider the following 962-residue polypeptide: Phosphatidylinositol 3,4,5-trisphosphate 3-phosphatase and dual-specificity protein phosphatase daf-18 (962 aa).

The tract at residues 1–37 (MVTPPPDVPSTSTRSMARDLQENPNRQPGEPRVSEPY) is disordered. The Phosphatase tensin-type domain maps to 58 to 230 (CRTEYQNIDL…YYYHKLRERE (173 aa)). The active-site Phosphocysteine intermediate is the Cys-169. Positions 234–530 (LPLRMQLIGV…GMKLHVVLRC (297 aa)) constitute a C2 tensin-type domain. Disordered stretches follow at residues 382 to 416 (DTSIGRKNGMRRNETPMRKIDPETGNEFESPWQIV) and 689 to 731 (IENT…RLPD). The span at 392-403 (RRNETPMRKIDP) shows a compositional bias: basic and acidic residues. Residues 692–704 (TGPSTSGSSAPGT) show a composition bias toward low complexity. Basic and acidic residues predominate over residues 706-720 (KKTEASQSDKVKPAT).

This sequence belongs to the PTEN phosphatase protein family. Interacts (via C-terminus) with vab-1 (via kinase domain); the interaction is independent of vab-1 kinase activity. Interacts with arr-1 and mpz-1; the interaction may inhibit daf-18. Interacts (via C-terminus) with daf-2 (via kinase domain). Post-translationally, phosphorylated by vab-1 on tyrosine residues which may promote daf-18 degradation. In terms of tissue distribution, expressed in embryo, larvae and in adult germline (at protein level). Expressed at equal levels in the 6 vulva precursor cells (VPCs) of L2 larvae and in the descendant cells of the induced VPCs (at protein level). Expressed in the uterus (at protein level). Expressed in the Z2/Z3 germline precursors, oocytes, several amphid neurons and weakly in the nerve cord (at protein level).

It localises to the perikaryon. Its subcellular location is the cell membrane. It is found in the cell projection. The protein resides in the axon. The protein localises to the dendrite. It localises to the cytoplasm. Its subcellular location is the nucleus. It catalyses the reaction a 1,2-diacyl-sn-glycero-3-phospho-(1D-myo-inositol-3,4,5-trisphosphate) + H2O = a 1,2-diacyl-sn-glycero-3-phospho-(1D-myo-inositol-4,5-bisphosphate) + phosphate. The catalysed reaction is O-phospho-L-seryl-[protein] + H2O = L-seryl-[protein] + phosphate. It carries out the reaction O-phospho-L-threonyl-[protein] + H2O = L-threonyl-[protein] + phosphate. The enzyme catalyses O-phospho-L-tyrosyl-[protein] + H2O = L-tyrosyl-[protein] + phosphate. It catalyses the reaction 1,2-dioctanoyl-sn-glycero-3-phospho-(1D-myo-inositol-3,4,5-trisphosphate) + H2O = 1,2-dioctanoyl-sn-glycero-3-phospho-(1D-myo-inositol-4,5-bisphosphate) + phosphate. The catalysed reaction is 1,2-dihexadecanoyl-sn-glycero-3-phospho-(1D-myo-inositol-3,4,5-trisphosphate) + H2O = 1,2-dihexadecanoyl-sn-glycero-3-phospho-(1D-myo-inositol-4,5-bisphosphate) + phosphate. Functionally, acts as a dual-specificity protein phosphatase, dephosphorylating tyrosine-, serine- and threonine-phosphorylated proteins. Also acts as a lipid phosphatase, removing the phosphate in the D3 position of the inositol ring from phosphatidylinositol 3,4,5-trisphosphate. By dephosphorylating PtdIns(3,4,5)P3 antagonizes PtdIns(3,4,5)P3 production by age-1/PI3K and thus, negatively regulates daf-2-mediated processes including dauer formation, longevity, fat metabolism, chemotaxis towards salt, thermotolerance and axon guidance. Similarly, promotes apoptosis during embryonic development by suppressing the recruitment of the prosurvival kinases akt-1/2 to the plasma membrane. In addition, regulates Z2/Z3 germline precursor cell cycle by maintaining them arrested at the G2 stage and by controlling their growth during L1 diapause. After sperm depletion in larvae and adult hermaphrodites, promotes germline stem cell quiescence and oocyte accumulation. By dephosphorylating ephrin-like receptor vab-1 on tyrosine residues, negatively regulates oocyte maturation downstream of vab-1 and upstream of mpk-1, independently of daf-2. Plays a role in postembryonic muscle arm extensions. Required for neurite outgrowth during AIY interneuron embryonic development. Mainly independently of daf-2, negatively regulates vulva induction probably by inhibiting mpk-1 phosphorylation. Both lipid and protein phosphatase activities are required for the regulation of vulva induction. Plays a role in gonad and germline development following the L1 diapause. This is Phosphatidylinositol 3,4,5-trisphosphate 3-phosphatase and dual-specificity protein phosphatase daf-18 from Caenorhabditis elegans.